The following is a 336-amino-acid chain: Structure-specific endonuclease subunit SLX1 (336 aa).

The region spanning 21-104 is the GIY-YIG domain; it reads SFYGVYLLQS…QHCHETRHIK (84 aa). Positions 37–57 are disordered; sequence FYIGSTPDPPRRLRQHNGDLK. Residues 214-290 form an SLX1-type zinc finger; the sequence is CALCLEPIEQ…PATVNRCCSC (77 aa).

It belongs to the SLX1 family. As to quaternary structure, forms a heterodimer with SLX4. A divalent metal cation is required as a cofactor.

Its subcellular location is the nucleus. Catalytic subunit of the SLX1-SLX4 structure-specific endonuclease that resolves DNA secondary structures generated during DNA repair and recombination. Has endonuclease activity towards branched DNA substrates, introducing single-strand cuts in duplex DNA close to junctions with ss-DNA. The sequence is that of Structure-specific endonuclease subunit SLX1 from Scheffersomyces stipitis (strain ATCC 58785 / CBS 6054 / NBRC 10063 / NRRL Y-11545) (Yeast).